The sequence spans 275 residues: Formamidopyrimidine-DNA glycosylase (275 aa).

Pro-2 (schiff-base intermediate with DNA) is an active-site residue. The Proton donor role is filled by Glu-3. Catalysis depends on Lys-58, which acts as the Proton donor; for beta-elimination activity. Positions 89, 108, and 151 each coordinate DNA. The FPG-type; degenerate zinc-finger motif lies at 236–275 (KVYDRAGQPCERCPGPAACAGISRTVQSGRATYFCARTQK). Catalysis depends on Arg-265, which acts as the Proton donor; for delta-elimination activity.

This sequence belongs to the FPG family. As to quaternary structure, monomer. It depends on Zn(2+) as a cofactor.

It catalyses the reaction Hydrolysis of DNA containing ring-opened 7-methylguanine residues, releasing 2,6-diamino-4-hydroxy-5-(N-methyl)formamidopyrimidine.. The catalysed reaction is 2'-deoxyribonucleotide-(2'-deoxyribose 5'-phosphate)-2'-deoxyribonucleotide-DNA = a 3'-end 2'-deoxyribonucleotide-(2,3-dehydro-2,3-deoxyribose 5'-phosphate)-DNA + a 5'-end 5'-phospho-2'-deoxyribonucleoside-DNA + H(+). Involved in base excision repair of DNA damaged by oxidation or by mutagenic agents. Acts as a DNA glycosylase that recognizes and removes damaged bases. Has a preference for oxidized purines, such as 7,8-dihydro-8-oxoguanine (8-oxoG). Has AP (apurinic/apyrimidinic) lyase activity and introduces nicks in the DNA strand. Cleaves the DNA backbone by beta-delta elimination to generate a single-strand break at the site of the removed base with both 3'- and 5'-phosphates. In Acidiphilium cryptum (strain JF-5), this protein is Formamidopyrimidine-DNA glycosylase.